A 404-amino-acid chain; its full sequence is Cysteine desulfurase IscS (404 aa).

Residues 75–76 (AT), asparagine 155, glutamine 183, and 203–205 (SAH) each bind pyridoxal 5'-phosphate. An N6-(pyridoxal phosphate)lysine modification is found at lysine 206. Threonine 243 serves as a coordination point for pyridoxal 5'-phosphate. Residue cysteine 328 is the Cysteine persulfide intermediate of the active site. Position 328 (cysteine 328) interacts with [2Fe-2S] cluster.

The protein belongs to the class-V pyridoxal-phosphate-dependent aminotransferase family. NifS/IscS subfamily. Homodimer. Forms a heterotetramer with IscU, interacts with other sulfur acceptors. Pyridoxal 5'-phosphate serves as cofactor.

It localises to the cytoplasm. It carries out the reaction (sulfur carrier)-H + L-cysteine = (sulfur carrier)-SH + L-alanine. The protein operates within cofactor biosynthesis; iron-sulfur cluster biosynthesis. In terms of biological role, master enzyme that delivers sulfur to a number of partners involved in Fe-S cluster assembly, tRNA modification or cofactor biosynthesis. Catalyzes the removal of elemental sulfur atoms from cysteine to produce alanine. Functions as a sulfur delivery protein for Fe-S cluster synthesis onto IscU, an Fe-S scaffold assembly protein, as well as other S acceptor proteins. This chain is Cysteine desulfurase IscS, found in Vibrio vulnificus (strain YJ016).